The primary structure comprises 639 residues: CD2-associated protein (639 aa).

One can recognise an SH3 1; truncated domain in the interval 1–59 (MVDYIVEYDYDAVHDDELTIRVGEIIRNVKKLQEEGWLEGELNGRRGMFPDNFVKEIKR). An interaction with ANLN and localization to the midbody region spans residues 1 to 175 (MVDYIVEYDY…EVTDDGETHE (175 aa)). Lysine 58 is covalently cross-linked (Glycyl lysine isopeptide (Lys-Gly) (interchain with G-Cter in SUMO2)). Serine 67, serine 80, and serine 86 each carry phosphoserine. The 60-residue stretch at 108 to 167 (TKKRQCKVLFEYIPQNEDELELKVGDIIDINEEVEEGWWSGTLNNKLGLFPSNFVKELEV) folds into the SH3 2 domain. Positions 168-177 (TDDGETHEAQ) are enriched in basic and acidic residues. The disordered stretch occupies residues 168–209 (TDDGETHEAQDDSETVLAGPTSPIPSLGNVSETASGSVTQPK). Positions 195–207 (GNVSETASGSVTQ) are enriched in polar residues. At serine 224 the chain carries Phosphoserine. A disordered region spans residues 227–256 (LRTRTSSSETEEKKPEKPLILQSLGPKTQS). One can recognise an SH3 3 domain in the interval 269–330 (KAKEYCRTLF…PDNFAVQINE (62 aa)). The segment at 333-428 (KDFPKPKKPP…PPPPIAKING (96 aa)) is disordered. 3 short sequence motifs (SH3-binding) span residues 336 to 352 (PKPKKPPPPAKAPAPKP), 378 to 397 (KPSKPAAPQVPPKKPTPPTK), and 410 to 422 (PKRPEKPVPPPPP). Over residues 341-351 (PPPPAKAPAPK) the composition is skewed to pro residues. Basic and acidic residues predominate over residues 356 to 379 (AAEKKYFSLKPEEKDEKSTLEQKP). Positions 385-395 (PQVPPKKPTPP) are enriched in pro residues. Residues serine 458, serine 463, serine 469, serine 510, and serine 514 each carry the phosphoserine modification. Lysine 523 is covalently cross-linked (Glycyl lysine isopeptide (Lys-Gly) (interchain with G-Cter in SUMO2)). Position 565 is a phosphothreonine (threonine 565). Positions 577–638 (DVKKNSLDEL…IEKLKKAVLS (62 aa)) form a coiled coil. A Phosphoserine modification is found at serine 582.

In terms of assembly, homodimer. Interacts with F-actin, PKD2, NPHS1 and NPHS2. Interacts with WTIP. Interacts with DDN; interaction is direct. Interacts (via SH3 2 domain) with CBL (via phosphorylated C-terminus). Interacts with BCAR1/p130Cas (via SH3 domain). Interacts with MVB12A and ARHGAP17. Interacts with ANLN, CD2 and CBLB. Interacts with PDCD6IP and TSG101. Interacts with RIN3. Interacts directly with RET (inactive) and CBLC; upon RET activation by GDNF suggested to dissociate from RET as CBLC:CD2AP complex. Interacts with CGNL1 and SH3BP1; probably part of a complex at cell junctions. Interacts with CAPZA1. (Microbial infection) Interacts (via SH3 domains) with Chikungunya virus non-structural protein 3 (via C-terminus); this interaction plays a role in initiation of viral replication. Post-translationally, phosphorylated on tyrosine residues; probably by c-Abl, Fyn and c-Src. In terms of tissue distribution, widely expressed in fetal and adult tissues.

It localises to the cytoplasm. The protein resides in the cytoskeleton. The protein localises to the cell projection. Its subcellular location is the ruffle. It is found in the cell junction. Functionally, seems to act as an adapter protein between membrane proteins and the actin cytoskeleton. In collaboration with CBLC, modulates the rate of RET turnover and may act as regulatory checkpoint that limits the potency of GDNF on neuronal survival. Controls CBLC function, converting it from an inhibitor to a promoter of RET degradation. May play a role in receptor clustering and cytoskeletal polarity in the junction between T-cell and antigen-presenting cell. May anchor the podocyte slit diaphragm to the actin cytoskeleton in renal glomerolus. Also required for cytokinesis. Plays a role in epithelial cell junctions formation. The protein is CD2-associated protein (CD2AP) of Homo sapiens (Human).